Reading from the N-terminus, the 589-residue chain is 2-succinyl-5-enolpyruvyl-6-hydroxy-3-cyclohexene-1-carboxylate synthase (589 aa).

It belongs to the TPP enzyme family. MenD subfamily. As to quaternary structure, homodimer. Mg(2+) is required as a cofactor. The cofactor is Mn(2+). Requires thiamine diphosphate as cofactor.

The enzyme catalyses isochorismate + 2-oxoglutarate + H(+) = 5-enolpyruvoyl-6-hydroxy-2-succinyl-cyclohex-3-ene-1-carboxylate + CO2. It participates in quinol/quinone metabolism; 1,4-dihydroxy-2-naphthoate biosynthesis; 1,4-dihydroxy-2-naphthoate from chorismate: step 2/7. The protein operates within quinol/quinone metabolism; menaquinone biosynthesis. Catalyzes the thiamine diphosphate-dependent decarboxylation of 2-oxoglutarate and the subsequent addition of the resulting succinic semialdehyde-thiamine pyrophosphate anion to isochorismate to yield 2-succinyl-5-enolpyruvyl-6-hydroxy-3-cyclohexene-1-carboxylate (SEPHCHC). This is 2-succinyl-5-enolpyruvyl-6-hydroxy-3-cyclohexene-1-carboxylate synthase from Myxococcus xanthus (strain DK1622).